A 652-amino-acid polypeptide reads, in one-letter code: DNA ligase (652 aa).

Residues 29–33 (DAEYD), 78–79 (SL), and Glu107 each bind NAD(+). Lys109 (N6-AMP-lysine intermediate) is an active-site residue. NAD(+) contacts are provided by Arg130, Glu164, Lys278, and Lys302. 4 residues coordinate Zn(2+): Cys395, Cys398, Cys413, and Cys418. The 76-residue stretch at 577–652 (ADDAILSGKT…VKDEAWLLDL (76 aa)) folds into the BRCT domain.

It belongs to the NAD-dependent DNA ligase family. LigA subfamily. Mg(2+) serves as cofactor. It depends on Mn(2+) as a cofactor.

The catalysed reaction is NAD(+) + (deoxyribonucleotide)n-3'-hydroxyl + 5'-phospho-(deoxyribonucleotide)m = (deoxyribonucleotide)n+m + AMP + beta-nicotinamide D-nucleotide.. DNA ligase that catalyzes the formation of phosphodiester linkages between 5'-phosphoryl and 3'-hydroxyl groups in double-stranded DNA using NAD as a coenzyme and as the energy source for the reaction. It is essential for DNA replication and repair of damaged DNA. In Streptococcus thermophilus (strain CNRZ 1066), this protein is DNA ligase.